The sequence spans 35 residues: uncharacterized protein (35 aa).

Residues 14–34 (LAHLIGIIYLIIILGTLVMLF) traverse the membrane as a helical segment.

It localises to the endoplasmic reticulum membrane. This is an uncharacterized protein from Saccharomyces cerevisiae (strain ATCC 204508 / S288c) (Baker's yeast).